A 521-amino-acid polypeptide reads, in one-letter code: Matrix metalloproteinase-A (521 aa).

The first 21 residues, 1–21 (MFTGLHDILIILFLLVTLKIA), serve as a signal peptide directing secretion. Residues 22–95 (QNVDHTKFLQ…EDHQKSRGKR (74 aa)) constitute a propeptide, activation peptide. The Cysteine switch motif lies at 78–85 (PRCGHPDV). A Zn(2+)-binding site is contributed by cysteine 80. At 96 to 500 (YAPPQFKWKE…FCPRNEKLVL (405 aa)) the chain is on the extracellular side. Residue asparagine 199 is glycosylated (N-linked (GlcNAc...) asparagine). Residue histidine 215 coordinates Zn(2+). Glutamate 216 is a catalytic residue. Zn(2+) is bound by residues histidine 219 and histidine 225. A disordered region spans residues 259-298 (KASKKENEEEERKTENEDKRRKTEKDRGRTREHESDDIRP). Residues 261–298 (SKKENEEEERKTENEDKRRKTEKDRGRTREHESDDIRP) show a composition bias toward basic and acidic residues. Hemopexin repeat units follow at residues 300 to 347 (ECRV…FPGL), 391 to 443 (EKYV…WARV), and 444 to 492 (PKGV…FGFC). A glycan (N-linked (GlcNAc...) asparagine) is linked at asparagine 469. A helical transmembrane segment spans residues 501 to 521 (NSSSSHFSLIYATITILILIF).

Belongs to the peptidase M10A family. Requires Zn(2+) as cofactor. As to expression, expressed in the anchor cell. Expressed in the anchor cell throughout the L3 and the early L4 stage, but not in vulva precursor cells P6.p, P6.px, or P6.pxx. Expression in P6.pxxx cells begins in late-L4 stage. During L4 lethargus, expressed in all four vulE cells, but not in vulF cells. The expression in vulE cells persists in adulthood. In males, expressed in the linker cell (LC) from the early L4 stage until LC death during the L4-to-adult molt.

The protein localises to the cell membrane. It localises to the basolateral cell membrane. Its function is as follows. Metalloprotease which, together with cadherin cdh-3 and hemicentin him-4, plays a role in anchor cell (AC) invasion during postembryonic vulval development probably by promoting the degradation of the basement membrane separating the gonad from the vulva epithelium. The protein is Matrix metalloproteinase-A of Caenorhabditis elegans.